Reading from the N-terminus, the 200-residue chain is Prostamide/prostaglandin F synthase (200 aa).

It belongs to the peroxiredoxin-like PRXL2 family. Prostamide/prostaglandin F synthase subfamily.

It localises to the cytoplasm. The protein localises to the cytosol. It catalyses the reaction prostaglandin H2 + [thioredoxin]-dithiol = prostaglandin F2alpha + [thioredoxin]-disulfide. The catalysed reaction is prostamide F2alpha + [thioredoxin]-disulfide = prostamide H2 + [thioredoxin]-dithiol. Its function is as follows. Catalyzes the reduction of prostaglandin-ethanolamide H(2) (prostamide H(2)) to prostamide F(2alpha) with NADPH as proton donor. Also able to reduce prostaglandin H(2) to prostaglandin F(2alpha). The sequence is that of Prostamide/prostaglandin F synthase (prxl2b) from Salmo salar (Atlantic salmon).